The following is a 129-amino-acid chain: Large ribosomal subunit protein bL20 (129 aa).

This sequence belongs to the bacterial ribosomal protein bL20 family.

In terms of biological role, binds directly to 23S ribosomal RNA and is necessary for the in vitro assembly process of the 50S ribosomal subunit. It is not involved in the protein synthesizing functions of that subunit. In Kineococcus radiotolerans (strain ATCC BAA-149 / DSM 14245 / SRS30216), this protein is Large ribosomal subunit protein bL20.